The sequence spans 291 residues: D-alanine--D-alanine ligase (291 aa).

One can recognise an ATP-grasp domain in the interval 99–291; the sequence is KRIVKSLGIN…FKKLISIIIT (193 aa). ATP is bound at residue 125 to 179; the sequence is EWNKFPAVVKPVREGSSVGLKIVESLEELKEYALDLLKKTERVMVEEFVEGRDMT. 3 residues coordinate Mg(2+): Asp-245, Glu-258, and Asn-260.

This sequence belongs to the D-alanine--D-alanine ligase family. The cofactor is Mg(2+). Mn(2+) serves as cofactor.

It localises to the cytoplasm. The enzyme catalyses 2 D-alanine + ATP = D-alanyl-D-alanine + ADP + phosphate + H(+). The protein operates within cell wall biogenesis; peptidoglycan biosynthesis. Cell wall formation. The polypeptide is D-alanine--D-alanine ligase (Aquifex aeolicus (strain VF5)).